The sequence spans 84 residues: ATP synthase subunit c (84 aa).

Helical transmembrane passes span Ile-9 to Ile-29 and Ile-54 to Ile-74.

Belongs to the ATPase C chain family. F-type ATPases have 2 components, F(1) - the catalytic core - and F(0) - the membrane proton channel. F(1) has five subunits: alpha(3), beta(3), gamma(1), delta(1), epsilon(1). F(0) has three main subunits: a(1), b(2) and c(10-14). The alpha and beta chains form an alternating ring which encloses part of the gamma chain. F(1) is attached to F(0) by a central stalk formed by the gamma and epsilon chains, while a peripheral stalk is formed by the delta and b chains.

The protein resides in the cell inner membrane. F(1)F(0) ATP synthase produces ATP from ADP in the presence of a proton or sodium gradient. F-type ATPases consist of two structural domains, F(1) containing the extramembraneous catalytic core and F(0) containing the membrane proton channel, linked together by a central stalk and a peripheral stalk. During catalysis, ATP synthesis in the catalytic domain of F(1) is coupled via a rotary mechanism of the central stalk subunits to proton translocation. Functionally, key component of the F(0) channel; it plays a direct role in translocation across the membrane. A homomeric c-ring of between 10-14 subunits forms the central stalk rotor element with the F(1) delta and epsilon subunits. This chain is ATP synthase subunit c, found in Haemophilus influenzae (strain ATCC 51907 / DSM 11121 / KW20 / Rd).